A 347-amino-acid polypeptide reads, in one-letter code: GMP reductase (347 aa).

Residue 108–131 participates in NADP(+) binding; sequence ADFQKTKDIMAISDEFIFICIDIA. Positions 181 and 183 each coordinate K(+). Cys-186 serves as the catalytic Thioimidate intermediate. An NADP(+)-binding site is contributed by 216 to 239; the sequence is IIGDGGCSCAGDVAKAFGGGADFV.

This sequence belongs to the IMPDH/GMPR family. GuaC type 1 subfamily. As to quaternary structure, homotetramer.

The enzyme catalyses IMP + NH4(+) + NADP(+) = GMP + NADPH + 2 H(+). Catalyzes the irreversible NADPH-dependent deamination of GMP to IMP. It functions in the conversion of nucleobase, nucleoside and nucleotide derivatives of G to A nucleotides, and in maintaining the intracellular balance of A and G nucleotides. The sequence is that of GMP reductase from Vibrio campbellii (strain ATCC BAA-1116).